A 152-amino-acid polypeptide reads, in one-letter code: Small ribosomal subunit protein uS11 (152 aa).

The interval 133–152 is disordered; that stretch reads VTPIPTDSTRRKSGHRGRRL. Residues 143-152 are compositionally biased toward basic residues; that stretch reads RKSGHRGRRL.

Belongs to the universal ribosomal protein uS11 family. In terms of assembly, component of the small ribosomal subunit. Part of the small subunit (SSU) processome, composed of more than 70 proteins and the RNA chaperone small nucleolar RNA (snoRNA) U3.

Its subcellular location is the cytoplasm. It is found in the nucleus. It localises to the nucleolus. In terms of biological role, component of the small ribosomal subunit. The ribosome is a large ribonucleoprotein complex responsible for the synthesis of proteins in the cell. Part of the small subunit (SSU) processome, first precursor of the small eukaryotic ribosomal subunit. During the assembly of the SSU processome in the nucleolus, many ribosome biogenesis factors, an RNA chaperone and ribosomal proteins associate with the nascent pre-rRNA and work in concert to generate RNA folding, modifications, rearrangements and cleavage as well as targeted degradation of pre-ribosomal RNA by the RNA exosome. The polypeptide is Small ribosomal subunit protein uS11 (rps14) (Dictyostelium discoideum (Social amoeba)).